The primary structure comprises 976 residues: Probable alanine--tRNA ligase, chloroplastic/mitochondrial (976 aa).

A chloroplast and mitochondrion-targeting transit peptide spans 1–54 (MPRPGFAHATAPALAHARARISPVARRRVVVMRTRVDGAAKSLVTQLRLALGST). Residues 71–95 (LGTATNDQSTGTRANPNAEGKDNSG) are disordered. Positions 73–85 (TATNDQSTGTRAN) are enriched in polar residues.

Belongs to the class-II aminoacyl-tRNA synthetase family. Monomer. The cofactor is Zn(2+).

The protein resides in the plastid. It is found in the chloroplast. Its subcellular location is the mitochondrion. The catalysed reaction is tRNA(Ala) + L-alanine + ATP = L-alanyl-tRNA(Ala) + AMP + diphosphate. Its function is as follows. Catalyzes the attachment of alanine to tRNA(Ala) in a two-step reaction: alanine is first activated by ATP to form Ala-AMP and then transferred to the acceptor end of tRNA(Ala). Also edits incorrectly charged tRNA(Ala) via its editing domain. This Ostreococcus tauri protein is Probable alanine--tRNA ligase, chloroplastic/mitochondrial.